Reading from the N-terminus, the 259-residue chain is Methyltransferase afvD (259 aa).

It belongs to the class I-like SAM-binding methyltransferase superfamily.

It participates in secondary metabolite biosynthesis. Methyltransferase; part of the gene cluster that mediates the biosynthesis of aflavarin, a bicoumarin that exhibits anti-insectan activity against the fungivorous beetle C.hemipterus. The polypeptide is Methyltransferase afvD (Aspergillus flavus (strain ATCC 200026 / FGSC A1120 / IAM 13836 / NRRL 3357 / JCM 12722 / SRRC 167)).